Reading from the N-terminus, the 574-residue chain is 2-succinyl-5-enolpyruvyl-6-hydroxy-3-cyclohexene-1-carboxylate synthase (574 aa).

It belongs to the TPP enzyme family. MenD subfamily. Homodimer. Mg(2+) is required as a cofactor. Requires Mn(2+) as cofactor. It depends on thiamine diphosphate as a cofactor.

The catalysed reaction is isochorismate + 2-oxoglutarate + H(+) = 5-enolpyruvoyl-6-hydroxy-2-succinyl-cyclohex-3-ene-1-carboxylate + CO2. It participates in quinol/quinone metabolism; 1,4-dihydroxy-2-naphthoate biosynthesis; 1,4-dihydroxy-2-naphthoate from chorismate: step 2/7. Its pathway is cofactor biosynthesis; phylloquinone biosynthesis. Catalyzes the thiamine diphosphate-dependent decarboxylation of 2-oxoglutarate and the subsequent addition of the resulting succinic semialdehyde-thiamine pyrophosphate anion to isochorismate to yield 2-succinyl-5-enolpyruvyl-6-hydroxy-3-cyclohexene-1-carboxylate (SEPHCHC). In Synechococcus sp. (strain RCC307), this protein is 2-succinyl-5-enolpyruvyl-6-hydroxy-3-cyclohexene-1-carboxylate synthase.